The following is a 257-amino-acid chain: Short-chain dehydrogenase reductase 3a (257 aa).

Residue 12–36 (IITGGASGIGAEAVRLFTDHGAKVV) participates in NAD(+) binding. Ser144 is a binding site for substrate. Tyr157 acts as the Proton acceptor in catalysis.

This sequence belongs to the short-chain dehydrogenases/reductases (SDR) family. As to expression, highly expressed in the radicle tip, lateral root primordia and tips, and the area surrounding the cotyledon hydathode of young seedlings.

Functionally, confers resistance to the incompatible pathogenic bacteria P.syringae pv. tomato DC3000 in a PR1-dependent manner. Seems not involved in abscisic acid (ABA) biosynthesis. The protein is Short-chain dehydrogenase reductase 3a (SDR3a) of Arabidopsis thaliana (Mouse-ear cress).